The primary structure comprises 258 residues: Isoprenyl transferase (258 aa).

Asp38 is an active-site residue. Residue Asp38 participates in Mg(2+) binding. Residues 39–42 (GNGR), Trp43, Arg51, His55, and 83–85 (STE) contribute to the substrate site. Asn86 functions as the Proton acceptor in the catalytic mechanism. Substrate is bound by residues Trp87, Arg89, Arg206, and 212–214 (RIS). Glu225 is a binding site for Mg(2+).

It belongs to the UPP synthase family. As to quaternary structure, homodimer. Mg(2+) serves as cofactor.

In terms of biological role, catalyzes the condensation of isopentenyl diphosphate (IPP) with allylic pyrophosphates generating different type of terpenoids. This is Isoprenyl transferase from Bacillus cereus (strain ATCC 10987 / NRS 248).